Here is a 657-residue protein sequence, read N- to C-terminus: Pentatricopeptide repeat-containing protein CRR2, chloroplastic (657 aa).

A chloroplast-targeting transit peptide spans 1–51; it reads MFLSHPPQVIQPTYHTVNFLPRSPLKPPSCSVALNNPSISSGAGAKISNNQ. PPR repeat units follow at residues 45–75, 76–110, 111–141, 142–176, 177–215, 216–246, 247–277, 284–318, 319–349, 350–384, 385–420, and 421–451; these read AKIS…ESSP, SQQT…GSDQ, DPFL…TRKR, TIYV…GVES, DRFT…GYSS, HVYI…MPVR, NVVS…MMRE, NSVT…GLDS, ILPV…MHDR, DVVS…GASP, TPVT…GIKP, and QIEH…MRTE. Residues 456–531 are type E motif; that stretch reads VWGSLLGSCR…LPGRCWMEVR (76 aa). Residues 532-562 form a type E(+) motif region; that stretch reads RKMYSFVSVDEFNPLMEQIHAFLVKLAEDMK. The segment at 563–657 is type DYW motif; sequence EKGYIPQTKG…NGVCSCGDYW (95 aa).

The protein belongs to the PPR family. PCMP-H subfamily.

Its subcellular location is the plastid. It is found in the chloroplast. Functionally, required for the intergenic processing between chloroplast rsp7 and ndhB transcripts. Necessary for chloroplast NADH dehydrogenase-like (NDH) complex-dependent cyclic electron transport around PSI (CET). The protein is Pentatricopeptide repeat-containing protein CRR2, chloroplastic of Arabidopsis thaliana (Mouse-ear cress).